Here is a 145-residue protein sequence, read N- to C-terminus: L-alanine exporter AlaE (145 aa).

4 helical membrane passes run 16–36 (FALVVYCFIIGMAIEIMLSGM), 42–62 (LSSRLLSIPVNIAIAWPYGLY), 86–106 (LFAYVSFQSPVYAAILWVIGA), and 111–131 (ILTAVTSNLVISMVMGVTYGY).

It belongs to the AlaE exporter family.

The protein localises to the cell inner membrane. In terms of biological role, exports L-alanine. The chain is L-alanine exporter AlaE from Pectobacterium parmentieri (strain WPP163) (Pectobacterium wasabiae (strain WPP163)).